The primary structure comprises 201 residues: Lipoprotein signal peptidase (201 aa).

The next 2 helical transmembrane spans lie at Ser-73–Ile-93 and Thr-97–Asp-117. Residues Asp-126 and Asp-144 contribute to the active site. Residues Tyr-135–Ile-155 form a helical membrane-spanning segment.

It belongs to the peptidase A8 family.

The protein resides in the cell inner membrane. The enzyme catalyses Release of signal peptides from bacterial membrane prolipoproteins. Hydrolyzes -Xaa-Yaa-Zaa-|-(S,diacylglyceryl)Cys-, in which Xaa is hydrophobic (preferably Leu), and Yaa (Ala or Ser) and Zaa (Gly or Ala) have small, neutral side chains.. It participates in protein modification; lipoprotein biosynthesis (signal peptide cleavage). This protein specifically catalyzes the removal of signal peptides from prolipoproteins. The chain is Lipoprotein signal peptidase from Rickettsia conorii (strain ATCC VR-613 / Malish 7).